Reading from the N-terminus, the 771-residue chain is Protein translocase subunit SecA 2 (771 aa).

Residues Gln-91, 109 to 113, and Asp-496 each bind ATP; that span reads GEGKT.

Belongs to the SecA family. As to quaternary structure, monomer and homodimer. Part of the essential Sec protein translocation apparatus which comprises SecA, SecYEG and auxiliary proteins SecDF. Other proteins may also be involved.

It is found in the cell membrane. It localises to the cytoplasm. It catalyses the reaction ATP + H2O + cellular proteinSide 1 = ADP + phosphate + cellular proteinSide 2.. In terms of biological role, part of the Sec protein translocase complex. Interacts with the SecYEG preprotein conducting channel. Has a central role in coupling the hydrolysis of ATP to the transfer of proteins into and across the cell membrane, serving as an ATP-driven molecular motor driving the stepwise translocation of polypeptide chains across the membrane. The chain is Protein translocase subunit SecA 2 from Corynebacterium jeikeium (strain K411).